A 308-amino-acid chain; its full sequence is Aspartate carbamoyltransferase catalytic subunit (308 aa).

2 residues coordinate carbamoyl phosphate: Arg-49 and Thr-50. L-aspartate is bound at residue Lys-77. Carbamoyl phosphate-binding residues include Arg-99, His-127, and Gln-130. Arg-160 and Arg-211 together coordinate L-aspartate. Residues Ala-252 and Pro-253 each coordinate carbamoyl phosphate.

Belongs to the aspartate/ornithine carbamoyltransferase superfamily. ATCase family. As to quaternary structure, heterododecamer (2C3:3R2) of six catalytic PyrB chains organized as two trimers (C3), and six regulatory PyrI chains organized as three dimers (R2).

The enzyme catalyses carbamoyl phosphate + L-aspartate = N-carbamoyl-L-aspartate + phosphate + H(+). It functions in the pathway pyrimidine metabolism; UMP biosynthesis via de novo pathway; (S)-dihydroorotate from bicarbonate: step 2/3. Functionally, catalyzes the condensation of carbamoyl phosphate and aspartate to form carbamoyl aspartate and inorganic phosphate, the committed step in the de novo pyrimidine nucleotide biosynthesis pathway. This chain is Aspartate carbamoyltransferase catalytic subunit, found in Geobacillus thermodenitrificans (strain NG80-2).